Here is a 102-residue protein sequence, read N- to C-terminus: NADH-quinone oxidoreductase subunit K 2 (102 aa).

The next 3 membrane-spanning stretches (helical) occupy residues 4-24 (ITPV…TVGV), 30-50 (IVII…NLIA), and 62-82 (IFAI…LGIL).

It belongs to the complex I subunit 4L family. As to quaternary structure, NDH-1 is composed of 14 different subunits. Subunits NuoA, H, J, K, L, M, N constitute the membrane sector of the complex.

Its subcellular location is the cell inner membrane. The enzyme catalyses a quinone + NADH + 5 H(+)(in) = a quinol + NAD(+) + 4 H(+)(out). NDH-1 shuttles electrons from NADH, via FMN and iron-sulfur (Fe-S) centers, to quinones in the respiratory chain. The immediate electron acceptor for the enzyme in this species is believed to be ubiquinone. Couples the redox reaction to proton translocation (for every two electrons transferred, four hydrogen ions are translocated across the cytoplasmic membrane), and thus conserves the redox energy in a proton gradient. The sequence is that of NADH-quinone oxidoreductase subunit K 2 from Solibacter usitatus (strain Ellin6076).